Here is a 402-residue protein sequence, read N- to C-terminus: MESLVARFDALQEAILTHIESQDDTLESQIRYWENIRKENAIMHFARKQGLTKLGLQPLPTLAVTEYNAKQAIQIHLTLQSLLKSPYGSERWTLPEVSAELINTAPQNCLKKGGYDVSVWFDNDRYNAMVYTNWDYLYYQDVNEIWHKVKGEVDYDGLYFTDHTGERAYFTLFSTDAHRFSRTGLWTVHFKTQVISSSVVSSTNTPSFDFEEQQLPGPSTPTYTELTQASPCGRGKSRESQPTSTTSPETSGLRVRRGRRQRKSGPGPGETPSKRRRGGGRGGGETRLESAPSPGEVGIRHRTVERQGLSRLGQLQAEARDPPMILLKGTANSLKCWRYRKQNSSNCGFLFMSTVWNWVGDVSENHSRMLIAFKSPGQRDSFVKHNLFPKLCTYTYGSLNSL.

The segment at 1–202 (MESLVARFDA…QVISSSVVSS (202 aa)) is transactivation domain. A disordered region spans residues 201–303 (SSTNTPSFDF…PGEVGIRHRT (103 aa)). Residues 216 to 230 (PGPSTPTYTELTQAS) show a composition bias toward polar residues. Over residues 240–253 (SQPTSTTSPETSGL) the composition is skewed to low complexity. Residues 254-263 (RVRRGRRQRK) are compositionally biased toward basic residues. A DNA-binding domain region spans residues 321–402 (DPPMILLKGT…TYTYGSLNSL (82 aa)). Residue Lys-328 forms a Glycyl lysine isopeptide (Lys-Gly) (interchain with G-Cter in SUMO) linkage.

Belongs to the papillomaviridae E2 protein family. As to quaternary structure, binds DNA as homodimer. Interacts with protein E1; this interaction greatly increases E1 DNA-binding activity. Interacts with protein L1; this interaction enhances E2-dependent replication and transcription activation. Interacts with protein L2; this interaction inhibits E2 transcriptional activity but not DNA replication function E2. Interacts with protein E7; this interaction inhibits E7 oncogenic activity. Interacts with host TAF1; this interaction modulates E2-dependent transcriptional regulation. Interacts with host BRD4; this interaction mediates E2 transcriptional activation function. Additionally, the interaction with host BRD4 on mitotic chromosomes mediates tethering of the viral genome. Interacts with host TOPBP1; this interaction is required for optimal viral DNA replication. Post-translationally, phosphorylated. Sumoylation plays a regulatory role in E2 transcriptional activity.

Its subcellular location is the host nucleus. Plays a role in the initiation of viral DNA replication. A dimer of E2 interacts with a dimer of E1 in order to improve specificity of E1 DNA binding activity. Once the complex recognizes and binds DNA at specific sites, the E2 dimer is removed from DNA. E2 also regulates viral transcription through binding to the E2RE response element (5'-ACCNNNNNNGGT-3') present in multiple copies in the regulatory regions of the viral genome. Activates or represses transcription depending on E2RE's position with regards to proximal promoter elements including the TATA-box. Repression occurs by sterically hindering the assembly of the transcription initiation complex. This chain is Regulatory protein E2, found in Human papillomavirus 65.